Consider the following 146-residue polypeptide: Hut operon positive regulatory protein (146 aa).

Belongs to the HutP family. In terms of assembly, homohexamer.

In terms of biological role, antiterminator that binds to cis-acting regulatory sequences on the mRNA in the presence of histidine, thereby suppressing transcription termination and activating the hut operon for histidine utilization. The sequence is that of Hut operon positive regulatory protein from Bacillus cereus (strain AH820).